Reading from the N-terminus, the 130-residue chain is Small ribosomal subunit protein eS8 (130 aa).

This sequence belongs to the eukaryotic ribosomal protein eS8 family. Part of the 30S ribosomal subunit.

This chain is Small ribosomal subunit protein eS8, found in Thermococcus onnurineus (strain NA1).